We begin with the raw amino-acid sequence, 940 residues long: Isoleucine--tRNA ligase (940 aa).

The 'HIGH' region motif lies at 58–68 (PYANGSIHIGH). Position 563 (glutamate 563) interacts with L-isoleucyl-5'-AMP. The 'KMSKS' region motif lies at 604–608 (KMSKS). ATP is bound at residue lysine 607. Zn(2+)-binding residues include cysteine 902, cysteine 905, cysteine 922, and cysteine 925.

It belongs to the class-I aminoacyl-tRNA synthetase family. IleS type 1 subfamily. Monomer. The cofactor is Zn(2+).

The protein localises to the cytoplasm. It carries out the reaction tRNA(Ile) + L-isoleucine + ATP = L-isoleucyl-tRNA(Ile) + AMP + diphosphate. Functionally, catalyzes the attachment of isoleucine to tRNA(Ile). As IleRS can inadvertently accommodate and process structurally similar amino acids such as valine, to avoid such errors it has two additional distinct tRNA(Ile)-dependent editing activities. One activity is designated as 'pretransfer' editing and involves the hydrolysis of activated Val-AMP. The other activity is designated 'posttransfer' editing and involves deacylation of mischarged Val-tRNA(Ile). The polypeptide is Isoleucine--tRNA ligase (Marinomonas sp. (strain MWYL1)).